The following is a 492-amino-acid chain: Pentatricopeptide repeat-containing protein At4g21705, mitochondrial (492 aa).

The N-terminal 17 residues, 1-17 (MNILRRIPANLIASRYY), are a transit peptide targeting the mitochondrion. 8 PPR repeats span residues 125–159 (NDKTYGALLNCYVRQQNVEKSLLHFEKMKEMGFVT), 160–194 (SSLTYNNIMCLYTNIGQHEKVPKVLEEMKEENVAP), 195–225 (DNYSYRICINAFGAMYDLERIGGTLRDMERR), 231–261 (DWNTYAVAAKFYIDGGDCDRAVELLKMSENR), 266–296 (DGEGYNHLITLYARLGKKIEVLRLWDLEKDV), 301–335 (INQDYLTVLQSLVKIDALVEAEEVLTEWKSSGNCY), 336–370 (DFRVPNTVIRGYIGKSMEEKAEAMLEDLARRGKAT), and 371–405 (TPESWELVATAYAEKGTLENAFKCMKTALGVEVGS).

It belongs to the PPR family. P subfamily.

It is found in the mitochondrion. The chain is Pentatricopeptide repeat-containing protein At4g21705, mitochondrial from Arabidopsis thaliana (Mouse-ear cress).